Here is a 1372-residue protein sequence, read N- to C-terminus: Capping protein, Arp2/3 and myosin-I linker protein 3 (1372 aa).

Residues Arg-126–Ser-151 are disordered. Residues Thr-138–Ser-151 show a composition bias toward low complexity. LRR repeat units lie at residues Ser-244–Ala-264, Val-274–Gln-295, Gly-303–Gly-323, Ser-335–Tyr-357, Ala-365–Leu-385, His-392–Pro-413, Thr-424–Leu-444, Asp-455–Glu-475, Cys-482–Val-501, and Ser-509–Leu-530. 3 disordered regions span residues Thr-865–Thr-900, Lys-970–Asn-1003, and Glu-1024–Asp-1372. Positions Pro-982–Pro-995 are enriched in pro residues. The interval Ser-1040–Pro-1073 is necessary for localization at the cell membrane. The segment covering Gln-1048–Ser-1063 has biased composition (basic residues). The segment covering Leu-1079–Pro-1098 has biased composition (pro residues). The span at Ser-1099–Ser-1109 shows a compositional bias: low complexity. Basic and acidic residues-rich tracts occupy residues Glu-1163–Pro-1177 and Arg-1219–Glu-1229. The span at Pro-1233–Ser-1244 shows a compositional bias: polar residues. The segment covering Gln-1348–Pro-1361 has biased composition (basic and acidic residues).

The protein belongs to the CARMIL family. Widely expressed, with much higher levels in fetal tissues than in adult ones. Up-regulated in certain cancer tissues.

Its subcellular location is the cytoplasm. It is found in the cell membrane. The chain is Capping protein, Arp2/3 and myosin-I linker protein 3 from Homo sapiens (Human).